Reading from the N-terminus, the 201-residue chain is uncharacterized protein (201 aa).

A signal peptide spans 1 to 28; that stretch reads MMTFKNLRYGLSSSVVLAASLFSVLSYA.

Belongs to the fimbrial protein family.

The protein resides in the fimbrium. Functionally, part of the yadCKLM-htrE-yadVN fimbrial operon. Could contribute to adhesion to various surfaces in specific environmental niches. This is an uncharacterized protein from Escherichia coli (strain K12).